The following is a 79-amino-acid chain: Small ribosomal subunit protein bS21 (79 aa).

The disordered stretch occupies residues 58–79; the sequence is ARKKMQREGLLPMKPKPMPGMR.

The protein belongs to the bacterial ribosomal protein bS21 family.

This Beijerinckia indica subsp. indica (strain ATCC 9039 / DSM 1715 / NCIMB 8712) protein is Small ribosomal subunit protein bS21.